Reading from the N-terminus, the 552-residue chain is Arginine--tRNA ligase (552 aa).

A 'HIGH' region motif is present at residues Ala130 to Gly140.

The protein belongs to the class-I aminoacyl-tRNA synthetase family. In terms of assembly, monomer.

The protein localises to the cytoplasm. The catalysed reaction is tRNA(Arg) + L-arginine + ATP = L-arginyl-tRNA(Arg) + AMP + diphosphate. The polypeptide is Arginine--tRNA ligase (Nocardia farcinica (strain IFM 10152)).